Here is a 203-residue protein sequence, read N- to C-terminus: Pectinesterase inhibitor 12 (203 aa).

Positions 1 to 26 (MRMSKALAAVVAISVSLSAAAMGVDA) are cleaved as a signal peptide. 2 disulfide bridges follow: Cys32–Cys47 and Cys100–Cys140.

Belongs to the PMEI family.

Its subcellular location is the secreted. The protein resides in the extracellular space. It localises to the apoplast. Pectin methylesterase (PME) inhibitor that inhibits PME in vitro. The chain is Pectinesterase inhibitor 12 from Oryza sativa subsp. japonica (Rice).